The chain runs to 406 residues: CinA-like protein (406 aa).

This sequence belongs to the CinA family.

This chain is CinA-like protein, found in Deinococcus geothermalis (strain DSM 11300 / CIP 105573 / AG-3a).